Consider the following 501-residue polypeptide: Inactive cytidine monophosphate-N-acetylneuraminic acid hydroxylase (501 aa).

Belongs to the CMP-Neu5Ac hydroxylase family. Widely expressed. Highly expressed in thymus. Not expressed in brain. May be expressed in adult stem cells (at protein level).

It is found in the cytoplasm. In terms of biological role, sialic acids are components of carbohydrate chains of glycoconjugates and are involved in cell-cell recognition and cell-pathogen interactions. That protein has no CMP-N-acetylneuraminate monooxygenase activity and is not able to convert CMP-N-acetylneuraminic acid (CMP-Neu5Ac) into its hydroxylated derivative CMP-N-glycolylneuraminic acid (CMP-Neu5Gc), a sialic acid abundantly expressed at the surface of many cells in vertebrates. However, it may play a role in Wnt signaling. The sequence is that of Inactive cytidine monophosphate-N-acetylneuraminic acid hydroxylase (CMAHP) from Homo sapiens (Human).